The chain runs to 332 residues: Ubiquinone biosynthesis protein COQ4, mitochondrial (332 aa).

The transit peptide at 1–16 (MFTVSKKSLQASRNAF) directs the protein to the mitochondrion. The Zn(2+) site is built by H212, D213, H216, and E228.

It belongs to the COQ4 family. As to quaternary structure, component of a multi-subunit COQ enzyme complex, composed of at least COQ3, COQ4, COQ5, COQ6, COQ7 and COQ9. Zn(2+) is required as a cofactor.

Its subcellular location is the mitochondrion inner membrane. It catalyses the reaction a 4-hydroxy-3-methoxy-5-(all-trans-polyprenyl)benzoate + H(+) = a 2-methoxy-6-(all-trans-polyprenyl)phenol + CO2. Its pathway is cofactor biosynthesis; ubiquinone biosynthesis. Functionally, lyase that catalyzes the C1-decarboxylation of 4-hydroxy-3-methoxy-5-(all-trans-polyprenyl)benzoic acid into 2-methoxy-6-(all-trans-polyprenyl)phenol during ubiquinone biosynthesis. The sequence is that of Ubiquinone biosynthesis protein COQ4, mitochondrial from Kluyveromyces lactis (strain ATCC 8585 / CBS 2359 / DSM 70799 / NBRC 1267 / NRRL Y-1140 / WM37) (Yeast).